A 185-amino-acid chain; its full sequence is Protein GrpE (185 aa).

The segment covering 1–12 (MADEQLNEKDLN) has biased composition (basic and acidic residues). Positions 1–22 (MADEQLNEKDLNVEETGAGNAA) are disordered.

The protein belongs to the GrpE family. As to quaternary structure, homodimer.

The protein localises to the cytoplasm. Its function is as follows. Participates actively in the response to hyperosmotic and heat shock by preventing the aggregation of stress-denatured proteins, in association with DnaK and GrpE. It is the nucleotide exchange factor for DnaK and may function as a thermosensor. Unfolded proteins bind initially to DnaJ; upon interaction with the DnaJ-bound protein, DnaK hydrolyzes its bound ATP, resulting in the formation of a stable complex. GrpE releases ADP from DnaK; ATP binding to DnaK triggers the release of the substrate protein, thus completing the reaction cycle. Several rounds of ATP-dependent interactions between DnaJ, DnaK and GrpE are required for fully efficient folding. The sequence is that of Protein GrpE from Pseudomonas putida (strain ATCC 700007 / DSM 6899 / JCM 31910 / BCRC 17059 / LMG 24140 / F1).